The sequence spans 606 residues: Zinc metalloproteinase-disintegrin-like HF3 (606 aa).

Positions 1–20 (MIQVLLVTICLAAFPYQGSS) are cleaved as a signal peptide. A propeptide spanning residues 21 to 190 (IILESGNVND…KKASQLVVTA (170 aa)) is cleaved from the precursor. The region spanning 199 to 395 (KYIELVILAD…YKPQCILNEP (197 aa)) is the Peptidase M12B domain. A Ca(2+)-binding site is contributed by Glu-202. N-linked (GlcNAc...) asparagine glycosylation is present at Asn-259. Asp-286 contacts Ca(2+). 3 disulfide bridges follow: Cys-310-Cys-390, Cys-350-Cys-374, and Cys-352-Cys-357. An N-linked (GlcNAc...) asparagine glycan is attached at Asn-313. His-335 contacts Zn(2+). Glu-336 is a catalytic residue. Zn(2+)-binding residues include His-339 and His-345. N-linked (GlcNAc...) asparagine glycosylation occurs at Asn-373. The Ca(2+) site is built by Cys-390, Asn-393, Val-405, Asn-408, Leu-410, Glu-412, Glu-415, and Asp-418. In terms of domain architecture, Disintegrin spans 403-489 (PPVCGNELLE…DCPTDDFKRN (87 aa)). Cystine bridges form between Cys-406–Cys-435, Cys-417–Cys-430, Cys-419–Cys-425, Cys-429–Cys-452, Cys-443–Cys-449, Cys-448–Cys-474, Cys-461–Cys-481, Cys-468–Cys-500, Cys-493–Cys-505, Cys-512–Cys-562, Cys-527–Cys-569, Cys-540–Cys-550, Cys-557–Cys-594, and Cys-588–Cys-599. The D/ECD-tripeptide motif lies at 467–469 (ECD). Ca(2+) contacts are provided by Asp-469, Glu-472, and Asp-484. N-linked (GlcNAc...) asparagine glycosylation occurs at Asn-519. N-linked (GlcNAc...) asparagine glycosylation occurs at Asn-584.

This sequence belongs to the venom metalloproteinase (M12B) family. P-III subfamily. P-IIIa sub-subfamily. In terms of assembly, monomer. Zn(2+) serves as cofactor. Expressed by the venom gland.

It localises to the secreted. Its function is as follows. The metalloproteinase-disintegrin-like HF3 is a potent hemorrhagic toxin that activates macrophages for phagocytosis through integrin alpha-M/beta-2 (ITGAM/ITGB2). It inhibits collagen-induced platelet aggregation. This protein shows cleavage specificity for substrate for leucine at P1' position, followed by hydrophobic residues in P2'. This is Zinc metalloproteinase-disintegrin-like HF3 from Bothrops jararaca (Jararaca).